The following is a 130-amino-acid chain: Small ribosomal subunit protein uS8 (130 aa).

This sequence belongs to the universal ribosomal protein uS8 family.

The protein is Small ribosomal subunit protein uS8 (RPS15A) of Paracentrotus lividus (Common sea urchin).